A 224-amino-acid chain; its full sequence is Putative N-acetylmannosamine-6-phosphate 2-epimerase (224 aa).

Belongs to the NanE family.

The enzyme catalyses an N-acyl-D-glucosamine 6-phosphate = an N-acyl-D-mannosamine 6-phosphate. It participates in amino-sugar metabolism; N-acetylneuraminate degradation; D-fructose 6-phosphate from N-acetylneuraminate: step 3/5. In terms of biological role, converts N-acetylmannosamine-6-phosphate (ManNAc-6-P) to N-acetylglucosamine-6-phosphate (GlcNAc-6-P). This Staphylococcus carnosus (strain TM300) protein is Putative N-acetylmannosamine-6-phosphate 2-epimerase.